The chain runs to 84 residues: MTDKIRTLQGRVVSDKMEKSIVVAIERFVKHPIYGKFIKRTTKLHVHDENNECGIGDVVEIRECRPLSKTKSWTLVRVVEKAVL.

It belongs to the universal ribosomal protein uS17 family. In terms of assembly, part of the 30S ribosomal subunit.

One of the primary rRNA binding proteins, it binds specifically to the 5'-end of 16S ribosomal RNA. This Shigella boydii serotype 18 (strain CDC 3083-94 / BS512) protein is Small ribosomal subunit protein uS17.